A 356-amino-acid polypeptide reads, in one-letter code: Phosphoribosylformylglycinamidine cyclo-ligase (356 aa).

The protein belongs to the AIR synthase family.

The protein localises to the cytoplasm. The enzyme catalyses 2-formamido-N(1)-(5-O-phospho-beta-D-ribosyl)acetamidine + ATP = 5-amino-1-(5-phospho-beta-D-ribosyl)imidazole + ADP + phosphate + H(+). It functions in the pathway purine metabolism; IMP biosynthesis via de novo pathway; 5-amino-1-(5-phospho-D-ribosyl)imidazole from N(2)-formyl-N(1)-(5-phospho-D-ribosyl)glycinamide: step 2/2. This is Phosphoribosylformylglycinamidine cyclo-ligase from Rhizobium meliloti (strain 1021) (Ensifer meliloti).